The following is a 2151-amino-acid chain: RNA-directed RNA polymerase L (2151 aa).

Histidine 36, glutamate 54, aspartate 97, glutamate 110, and valine 111 together coordinate Mn(2+). Lysine 124 acts as the For endonuclease activity in catalysis. Residues 956 to 1142 (NGKFIRMKRK…SVNTEMWKSM (187 aa)) form the RdRp catalytic domain. Aspartate 1099 contributes to the Mg(2+) binding site.

It belongs to the Bunyavirales RNA polymerase family. As to quaternary structure, interacts with the viral nucleoprotein. The cofactor is Mn(2+). Mg(2+) is required as a cofactor.

It is found in the host cytoplasm. The protein resides in the host perinuclear region. It carries out the reaction RNA(n) + a ribonucleoside 5'-triphosphate = RNA(n+1) + diphosphate. Functionally, RNA-dependent RNA polymerase, which is responsible for the replication and transcription of the viral RNA genome using antigenomic RNA as an intermediate. During transcription, synthesizes subgenomic RNAs and assures their capping by a cap-snatching mechanism, which involves the endonuclease activity cleaving the host capped pre-mRNAs. These short capped RNAs are then used as primers for viral transcription. Cleaves ssRNA substrates but not DNA. Seems to downregulate the expression of its own and heterologous mRNAs through its endonuclease activity. This is RNA-directed RNA polymerase L from Apodemus agrarius (Eurasian field mouse).